Reading from the N-terminus, the 59-residue chain is Large ribosomal subunit protein uL30 (59 aa).

The protein belongs to the universal ribosomal protein uL30 family. Part of the 50S ribosomal subunit.

This chain is Large ribosomal subunit protein uL30, found in Escherichia coli (strain UTI89 / UPEC).